The following is a 61-amino-acid chain: Large ribosomal subunit protein bL28 (61 aa).

The interval M1 to R26 is disordered.

Belongs to the bacterial ribosomal protein bL28 family.

This is Large ribosomal subunit protein bL28 from Pediococcus pentosaceus (strain ATCC 25745 / CCUG 21536 / LMG 10740 / 183-1w).